The chain runs to 113 residues: Hydrogenase maturation factor HypA (113 aa).

Histidine 2 lines the Ni(2+) pocket. Residues cysteine 73, cysteine 76, cysteine 89, and cysteine 92 each coordinate Zn(2+).

Belongs to the HypA/HybF family.

In terms of biological role, involved in the maturation of [NiFe] hydrogenases. Required for nickel insertion into the metal center of the hydrogenase. The chain is Hydrogenase maturation factor HypA from Rhodopseudomonas palustris (strain TIE-1).